We begin with the raw amino-acid sequence, 261 residues long: Cytochrome c oxidase subunit 3 (261 aa).

The Mitochondrial matrix portion of the chain corresponds to 1–15 (MTRQTHAYHMVNPSP). Residues 16–34 (WPLTGALSALLMTSGLIMW) form a helical membrane-spanning segment. Residues 35–40 (FHFNST) lie on the Mitochondrial intermembrane side of the membrane. The helical transmembrane segment at 41-66 (ILLMLGLTTNMLTMYQWWRDVIREST) threads the bilayer. Residues 67–72 (FQGHHT) are Mitochondrial matrix-facing. Residues 73 to 105 (PNVQKGLRYGMILFIISEVLFFTGFFWAFYHSS) traverse the membrane as a helical segment. Topologically, residues 106-128 (LAPTPELGGCWPPTGIHPLNPLE) are mitochondrial intermembrane. A helical transmembrane segment spans residues 129-152 (VPLLNTSVLLASGVSITWAHHSLM). Over 153–155 (EGN) the chain is Mitochondrial matrix. The helical transmembrane segment at 156–183 (RNHMLQALFITIALGVYFTLLQASEYYE) threads the bilayer. At 184–190 (APFTISD) the chain is on the mitochondrial intermembrane side. The helical transmembrane segment at 191 to 223 (GVYGSTFFVATGFHGLHVIIGSTFLIVCFFRQL) threads the bilayer. Topologically, residues 224–232 (KFHFTSNHH) are mitochondrial matrix. The helical transmembrane segment at 233–256 (FGFEAAAWYWHFVDVVWLFLYVSI) threads the bilayer. Residues 257–261 (YWWGS) are Mitochondrial intermembrane-facing.

It belongs to the cytochrome c oxidase subunit 3 family. In terms of assembly, component of the cytochrome c oxidase (complex IV, CIV), a multisubunit enzyme composed of 14 subunits. The complex is composed of a catalytic core of 3 subunits MT-CO1, MT-CO2 and MT-CO3, encoded in the mitochondrial DNA, and 11 supernumerary subunits COX4I, COX5A, COX5B, COX6A, COX6B, COX6C, COX7A, COX7B, COX7C, COX8 and NDUFA4, which are encoded in the nuclear genome. The complex exists as a monomer or a dimer and forms supercomplexes (SCs) in the inner mitochondrial membrane with NADH-ubiquinone oxidoreductase (complex I, CI) and ubiquinol-cytochrome c oxidoreductase (cytochrome b-c1 complex, complex III, CIII), resulting in different assemblies (supercomplex SCI(1)III(2)IV(1) and megacomplex MCI(2)III(2)IV(2)).

The protein localises to the mitochondrion inner membrane. The enzyme catalyses 4 Fe(II)-[cytochrome c] + O2 + 8 H(+)(in) = 4 Fe(III)-[cytochrome c] + 2 H2O + 4 H(+)(out). Its function is as follows. Component of the cytochrome c oxidase, the last enzyme in the mitochondrial electron transport chain which drives oxidative phosphorylation. The respiratory chain contains 3 multisubunit complexes succinate dehydrogenase (complex II, CII), ubiquinol-cytochrome c oxidoreductase (cytochrome b-c1 complex, complex III, CIII) and cytochrome c oxidase (complex IV, CIV), that cooperate to transfer electrons derived from NADH and succinate to molecular oxygen, creating an electrochemical gradient over the inner membrane that drives transmembrane transport and the ATP synthase. Cytochrome c oxidase is the component of the respiratory chain that catalyzes the reduction of oxygen to water. Electrons originating from reduced cytochrome c in the intermembrane space (IMS) are transferred via the dinuclear copper A center (CU(A)) of subunit 2 and heme A of subunit 1 to the active site in subunit 1, a binuclear center (BNC) formed by heme A3 and copper B (CU(B)). The BNC reduces molecular oxygen to 2 water molecules using 4 electrons from cytochrome c in the IMS and 4 protons from the mitochondrial matrix. The protein is Cytochrome c oxidase subunit 3 (MT-CO3) of Eudorcas rufifrons (Red-fronted gazelle).